A 407-amino-acid chain; its full sequence is 4-hydroxy-3-methylbut-2-en-1-yl diphosphate synthase (ferredoxin) (407 aa).

Positions 316, 319, 350, and 357 each coordinate [4Fe-4S] cluster.

It belongs to the IspG family. [4Fe-4S] cluster serves as cofactor.

The catalysed reaction is (2E)-4-hydroxy-3-methylbut-2-enyl diphosphate + 2 oxidized [2Fe-2S]-[ferredoxin] + H2O = 2-C-methyl-D-erythritol 2,4-cyclic diphosphate + 2 reduced [2Fe-2S]-[ferredoxin] + H(+). It functions in the pathway isoprenoid biosynthesis; isopentenyl diphosphate biosynthesis via DXP pathway; isopentenyl diphosphate from 1-deoxy-D-xylulose 5-phosphate: step 5/6. Its function is as follows. Converts 2C-methyl-D-erythritol 2,4-cyclodiphosphate (ME-2,4cPP) into 1-hydroxy-2-methyl-2-(E)-butenyl 4-diphosphate. This is 4-hydroxy-3-methylbut-2-en-1-yl diphosphate synthase (ferredoxin) from Cyanothece sp. (strain PCC 7425 / ATCC 29141).